The primary structure comprises 756 residues: MAKRTFSTLEAFLIFLLVIMTVITVALLTLLFVTSGTIENHKDSGNHWFSTTLGSTTTQPPPITQTPNFPSFRNFSGYYIGVGRADCTGQVSDINLMGYGKNGQNARGLLTRLFSRAFILADPDGSNRMAFVSVELCMISQRLRLEVLKRLESKYGSLYRRDNVILSAIHTHSGPAGFFQYTLYILASEGFSNRTFQYIVSGIMKSIDIAHTNLKPGKIFINKGNVANVQINRSPSSYLLNPQSERARYSSNTDKEMLVLKLVDLNGEDLGLISWFAIHPVSMNNSNHFVNSDNMGYAAYLFEQEKNKGYLPGQGPFVAGFASSNLGDVSPNILGPHCVNTGESCDNDKSTCPNGGPSMCMASGPGQDMFESTHIIGRIIYQKAKELYASASQEVTGPVLAAHQWVNMTDVSVQLNATHTVKTCKPALGYSFAAGTIDGVSGLNITQGTTEGDPFWDTLRDQLLGKPSEEIVECQKPKPILLHSGELTIPHPWQPDIVDVQIVTVGSLAIAAIPGELTTMSGRRFREAIKKEFALYGMKDMTVVIAGLSNVYTHYITTYEEYQAQRYEAASTIYGPHTLSAYIQLFRDLAKAIATDTVANMSSGPEPPFFKNLIASLIPNIADRAPIGKHFGDVLQPAKPEYRVGEVVEVIFVGANPKNSAENQTHQTFLTVEKYEDSVADWQIMYNDASWETRFYWHKGILGLSNATIYWHIPDTAYPGIYRIRYFGHNRKQELLKPAVILAFEGISSPFEVVTT.

At 1–11 (MAKRTFSTLEA) the chain is on the cytoplasmic side. A helical; Signal-anchor for type II membrane protein transmembrane segment spans residues 12-32 (FLIFLLVIMTVITVALLTLLF). The Lumenal segment spans residues 33–756 (VTSGTIENHK…ISSPFEVVTT (724 aa)). O-linked (GalNAc...) threonine glycosylation is found at T56, T57, T58, and T64. L110 contributes to the Ca(2+) binding site. Residue H170 coordinates Zn(2+). N193 is a glycosylation site (N-linked (GlcNAc...) asparagine). H279 provides a ligand contact to Zn(2+). Catalysis depends on S330, which acts as the Nucleophile. 2 disulfides stabilise this stretch: C338-C352 and C345-C360. N407 and N444 each carry an N-linked (GlcNAc...) asparagine glycan. A disulfide bond links C424 and C474. Positions 516 and 555 each coordinate Zn(2+). Residues D688, S690, and T693 each coordinate Ca(2+). The required for correct folding and localization stretch occupies residues 746–756 (GISSPFEVVTT).

The protein belongs to the neutral ceramidase family. In terms of assembly, may interact with CAV1. Requires Zn(2+) as cofactor. In terms of processing, proteolytic cleavage of the N-terminus removes the signal-anchor and produces a soluble form of the protein. Post-translationally, N-glycosylated. Required for enzyme activity. O-glycosylated. Required to retain it as a type II membrane protein at the cell surface. In terms of processing, phosphorylated. May prevent ubiquitination and subsequent degradation. Post-translationally, ubiquitinated, leading to its degradation by the proteasome. Ubiquitination is triggered by nitric oxide. Widely expressed. Strongly expressed in small intestine and to a lower extent in liver and kidney. Highly expressed in duodenum, jejunum and ileum along the brush border of the small intestine (at protein level).

Its subcellular location is the cell membrane. It localises to the membrane raft. It is found in the membrane. The protein resides in the caveola. The protein localises to the golgi apparatus membrane. Its subcellular location is the mitochondrion. It localises to the secreted. It is found in the extracellular exosome. It carries out the reaction an N-acylsphing-4-enine + H2O = sphing-4-enine + a fatty acid. The catalysed reaction is N-hexadecanoylsphing-4-enine + H2O = sphing-4-enine + hexadecanoate. The enzyme catalyses N-dodecanoylsphing-4-enine + H2O = dodecanoate + sphing-4-enine. It catalyses the reaction N-octadecanoylsphing-4-enine + H2O = sphing-4-enine + octadecanoate. It carries out the reaction N-octanoylsphing-4-enine + H2O = octanoate + sphing-4-enine. The catalysed reaction is N-(hexanoyl)sphing-4-enine + H2O = hexanoate + sphing-4-enine. The enzyme catalyses N-tetradecanoylsphing-4-enine + H2O = tetradecanoate + sphing-4-enine. It catalyses the reaction N-(9Z-octadecenoyl)-sphing-4-enine + H2O = sphing-4-enine + (9Z)-octadecenoate. It carries out the reaction N-(15Z-tetracosenoyl)-sphing-4-enine + H2O = (15Z)-tetracosenoate + sphing-4-enine. The catalysed reaction is sphinganine + hexadecanoate = N-hexadecanoylsphinganine + H2O. The enzyme catalyses N-(octadecanoyl)-sphinganine + H2O = sphinganine + octadecanoate. The protein operates within lipid metabolism; sphingolipid metabolism. With respect to regulation, inhibited by D-erythro-MAPP. Plasma membrane ceramidase that hydrolyzes sphingolipid ceramides into sphingosine and free fatty acids at neutral pH. Ceramides, sphingosine, and its phosphorylated form sphingosine-1-phosphate are bioactive lipids that mediate cellular signaling pathways regulating several biological processes including cell proliferation, apoptosis and differentiation. Also catalyzes the reverse reaction allowing the synthesis of ceramides from fatty acids and sphingosine. Together with sphingomyelinase, participates in the production of sphingosine and sphingosine-1-phosphate from the degradation of sphingomyelin, a sphingolipid enriched in the plasma membrane of cells. Also participates in the hydrolysis of ceramides from the extracellular milieu allowing the production of sphingosine-1-phosphate inside and outside cells. This is the case for instance with the digestion of dietary sphingolipids in the intestinal tract. This is Neutral ceramidase (Asah2) from Mus musculus (Mouse).